The chain runs to 683 residues: DNA-directed RNA polymerase subunit beta' (683 aa).

Positions 69, 71, 87, and 90 each coordinate Zn(2+). Positions 492, 494, and 496 each coordinate Mg(2+).

This sequence belongs to the RNA polymerase beta' chain family. RpoC1 subfamily. In terms of assembly, in plastids the minimal PEP RNA polymerase catalytic core is composed of four subunits: alpha, beta, beta', and beta''. When a (nuclear-encoded) sigma factor is associated with the core the holoenzyme is formed, which can initiate transcription. The cofactor is Mg(2+). Zn(2+) is required as a cofactor.

The protein localises to the plastid. Its subcellular location is the chloroplast. It catalyses the reaction RNA(n) + a ribonucleoside 5'-triphosphate = RNA(n+1) + diphosphate. Its function is as follows. DNA-dependent RNA polymerase catalyzes the transcription of DNA into RNA using the four ribonucleoside triphosphates as substrates. This is DNA-directed RNA polymerase subunit beta' from Coffea arabica (Arabian coffee).